The sequence spans 318 residues: Geranylfarnesyl diphosphate synthase (318 aa).

Isopentenyl diphosphate contacts are provided by Lys31, Arg34, and His65. 2 residues coordinate Mg(2+): Asp72 and Asp76. Arg81 is a binding site for an all-trans-polyprenyl diphosphate. Arg82 serves as a coordination point for isopentenyl diphosphate. An all-trans-polyprenyl diphosphate is bound by residues Lys166, Thr167, and Gln204.

It belongs to the FPP/GGPP synthase family. As to quaternary structure, homodimer. Requires Mg(2+) as cofactor.

The catalysed reaction is isopentenyl diphosphate + (2E,6E,10E)-geranylgeranyl diphosphate = (2E,6E,10E,14E)-geranylfarnesyl diphosphate + diphosphate. Functionally, probably involved in biosynthesis of the precursor for C25 (sesterterpanyl chain) moiety of C25-C25 diether (2,3-di-O-sesterterpanyl-sn-glycero) membrane lipid. Catalyzes the condensation of isopentenyl pyrophosphate with the allylic pyrophosphates to yield all-trans geranylfarnesyl diphosphate (GFPP). Geranylgeranyl diphosphate (GGPP) is the preferred substrate, however methylallyl diphosphate (DMAPP), farnesyl diphosphate (FPP) and geranyl diphosphate (GPP) can also be used as allylic substrate. In Aeropyrum pernix, this protein is Geranylfarnesyl diphosphate synthase (fgs).